An 87-amino-acid polypeptide reads, in one-letter code: UPF0250 protein CKO_02527 (87 aa).

This sequence belongs to the UPF0250 family.

The chain is UPF0250 protein CKO_02527 from Citrobacter koseri (strain ATCC BAA-895 / CDC 4225-83 / SGSC4696).